The primary structure comprises 835 residues: Protein translocase subunit SecA 1 (835 aa).

Residues glutamine 85, glycine 103 to threonine 107, and aspartate 492 each bind ATP. A disordered region spans residues valine 788–valine 807. Zn(2+) is bound by residues cysteine 819, cysteine 821, cysteine 830, and cysteine 831.

The protein belongs to the SecA family. In terms of assembly, monomer and homodimer. Part of the essential Sec protein translocation apparatus which comprises SecA, SecYEG and auxiliary proteins SecDF. Other proteins may also be involved. Zn(2+) serves as cofactor.

Its subcellular location is the cell membrane. It localises to the cytoplasm. It carries out the reaction ATP + H2O + cellular proteinSide 1 = ADP + phosphate + cellular proteinSide 2.. Its function is as follows. Part of the Sec protein translocase complex. Interacts with the SecYEG preprotein conducting channel. Has a central role in coupling the hydrolysis of ATP to the transfer of proteins into and across the cell membrane, serving as an ATP-driven molecular motor driving the stepwise translocation of polypeptide chains across the membrane. This Bacillus anthracis protein is Protein translocase subunit SecA 1.